The sequence spans 1408 residues: ABC multidrug transporter MDR1 (1408 aa).

Over residues 1-13 (MSASPSPIGAAAG) the composition is skewed to low complexity. Positions 1-103 (MSASPSPIGA…SISSAVPKSH (103 aa)) are disordered. The span at 17-38 (LQARRDEEVVDSEKDALAHDSH) shows a compositional bias: basic and acidic residues. 2 helical membrane passes run 147–167 (FAAPLEIVAMVFGLLLAIAAG) and 223–243 (LYLMAIGIGMFLATWLYMFIW). Residues 157–464 (VFGLLLAIAA…LAPELAAVTK (308 aa)) form the ABC transmembrane type-1 1 domain. Residue asparagine 244 is glycosylated (N-linked (GlcNAc...) asparagine). The next 4 membrane-spanning stretches (helical) occupy residues 296–316 (KVALVFQYAGTFVCGFVLAFV), 321–341 (LAGALISILPVIMICGGIMMT), 408–428 (IMFFAIYAAYALAFYYGGILV), and 436–456 (GIVINVFMSILIGSFSMAMLA). Positions 499–744 (ISFENVRFHY…ENGPYAQLVN (246 aa)) constitute an ABC transporter 1 domain. 534 to 541 (GASGSGKS) contributes to the ATP binding site. 2 helical membrane-spanning segments follow: residues 838–858 (IFAFIAAICAGMVYPSLAILF) and 882–902 (LWYFITALAAAIVIFFQSAGF). The ABC transmembrane type-1 2 domain maps to 838–1125 (IFAFIAAICA…VFTFVPDASK (288 aa)). An N-linked (GlcNAc...) asparagine glycan is attached at asparagine 934. The next 4 membrane-spanning stretches (helical) occupy residues 952-972 (GLFGPTLGTVVQSCATLIGGC), 973-993 (IIGLCYGPLLSLIGIACIPIL), 1072-1092 (GLTFCIIALVFYIGALWIIDG), and 1099-1119 (FYTVLNSIVFASIQAGNVFTF). Residues asparagine 1127 and asparagine 1182 are each glycosylated (N-linked (GlcNAc...) asparagine). One can recognise an ABC transporter 2 domain in the interval 1162–1402 (VRIEGVHFRY…KGGYYDLVQM (241 aa)). An ATP-binding site is contributed by 1197 to 1204 (GPSGCGKS). Asparagine 1404 is a glycosylation site (N-linked (GlcNAc...) asparagine).

This sequence belongs to the ABC transporter superfamily. ABCB family. Multidrug resistance exporter (TC 3.A.1.201) subfamily.

The protein localises to the cell membrane. It catalyses the reaction itraconazole(in) + ATP + H2O = itraconazole(out) + ADP + phosphate + H(+). It carries out the reaction voriconazole(in) + ATP + H2O = voriconazole(out) + ADP + phosphate + H(+). The catalysed reaction is fluconazole(in) + ATP + H2O = fluconazole(out) + ADP + phosphate + H(+). Functionally, pleiotropic ABC efflux transporter that confers resistance to structurally and functionally unrelated compounds including azoles such as fluconazole (FLC), itraconazole (ITC), posaconazole (POS), nocodazole and voriconazole (VRC). In Cryptococcus deuterogattii (strain R265) (Cryptococcus gattii VGII (strain R265)), this protein is ABC multidrug transporter MDR1.